Consider the following 341-residue polypeptide: FVMKREPLRFRDITVEGNENAYIKNGKLHLSLMDPSTLSLVTKADGKIDMTVDLISPVTKRASLKIDSKKYNLFHEGELSASIVNPRLSWHQYTKRDSREYKSDVELSLRSSDIALKITMPDYNSKIHYSRQGDQINMDIDGTLIEGHAQGTIREGKIHIKGRQTDFEIESNYRYEDGKLIIEPVKSENGKLEGVLSRKVPSHLTLETPRVKMNMKYDRYAPVKVFKLDYDGIHFEKHTDIEYEPGVRYKIIGNGKLKDDGRHYSIDVQGIPRKAFNLDADLMDFKLKVSKPEDSNKAQFSYTFNEYTETEEYEFDPHRAYYVNWLSSIRKYIQNFIVEDN.

This Dermatophagoides farinae (American house dust mite) protein is Allergen Mag (MAG).